The primary structure comprises 528 residues: ATP synthase subunit alpha 1 (528 aa).

169-176 (GDRQTGKT) contacts ATP.

This sequence belongs to the ATPase alpha/beta chains family. As to quaternary structure, F-type ATPases have 2 components, CF(1) - the catalytic core - and CF(0) - the membrane proton channel. CF(1) has five subunits: alpha(3), beta(3), gamma(1), delta(1), epsilon(1). CF(0) has three main subunits: a(1), b(2) and c(9-12). The alpha and beta chains form an alternating ring which encloses part of the gamma chain. CF(1) is attached to CF(0) by a central stalk formed by the gamma and epsilon chains, while a peripheral stalk is formed by the delta and b chains.

It localises to the cell membrane. The enzyme catalyses ATP + H2O + 4 H(+)(in) = ADP + phosphate + 5 H(+)(out). Its function is as follows. Produces ATP from ADP in the presence of a proton gradient across the membrane. The alpha chain is a regulatory subunit. The polypeptide is ATP synthase subunit alpha 1 (Mycoplasmopsis pulmonis (strain UAB CTIP) (Mycoplasma pulmonis)).